Reading from the N-terminus, the 107-residue chain is Nucleoid-associated protein Pnec_0645 (107 aa).

The protein belongs to the YbaB/EbfC family. In terms of assembly, homodimer.

It localises to the cytoplasm. The protein resides in the nucleoid. Its function is as follows. Binds to DNA and alters its conformation. May be involved in regulation of gene expression, nucleoid organization and DNA protection. In Polynucleobacter necessarius subsp. necessarius (strain STIR1), this protein is Nucleoid-associated protein Pnec_0645.